Consider the following 283-residue polypeptide: Thymidylate synthase (283 aa).

Arg22 contacts dUMP. Residue Cys160 is the Nucleophile of the active site. DUMP is bound by residues 180–183 (RSCD), Asn191, and 221–223 (HIY). Residue Asp183 participates in (6R)-5,10-methylene-5,6,7,8-tetrahydrofolate binding. Position 282 (Ser282) interacts with (6R)-5,10-methylene-5,6,7,8-tetrahydrofolate.

This sequence belongs to the thymidylate synthase family. Bacterial-type ThyA subfamily. Homodimer.

It is found in the cytoplasm. The enzyme catalyses dUMP + (6R)-5,10-methylene-5,6,7,8-tetrahydrofolate = 7,8-dihydrofolate + dTMP. It participates in pyrimidine metabolism; dTTP biosynthesis. Its function is as follows. Catalyzes the reductive methylation of 2'-deoxyuridine-5'-monophosphate (dUMP) to 2'-deoxythymidine-5'-monophosphate (dTMP) while utilizing 5,10-methylenetetrahydrofolate (mTHF) as the methyl donor and reductant in the reaction, yielding dihydrofolate (DHF) as a by-product. This enzymatic reaction provides an intracellular de novo source of dTMP, an essential precursor for DNA biosynthesis. The polypeptide is Thymidylate synthase (Shewanella pealeana (strain ATCC 700345 / ANG-SQ1)).